We begin with the raw amino-acid sequence, 328 residues long: Protoheme IX farnesyltransferase (328 aa).

The next 8 helical transmembrane spans lie at I31–V51, L53–I73, V120–V140, I153–G173, L181–I201, I226–V246, I250–L270, and Y285–T305.

This sequence belongs to the UbiA prenyltransferase family. Protoheme IX farnesyltransferase subfamily.

The protein localises to the cell inner membrane. The catalysed reaction is heme b + (2E,6E)-farnesyl diphosphate + H2O = Fe(II)-heme o + diphosphate. The protein operates within porphyrin-containing compound metabolism; heme O biosynthesis; heme O from protoheme: step 1/1. In terms of biological role, converts heme B (protoheme IX) to heme O by substitution of the vinyl group on carbon 2 of heme B porphyrin ring with a hydroxyethyl farnesyl side group. This chain is Protoheme IX farnesyltransferase, found in Trichodesmium erythraeum (strain IMS101).